Reading from the N-terminus, the 228-residue chain is Phosphatidylglycerophosphate phosphatase PTPMT2 (228 aa).

Over residues 1–10 (MTDETEEDDT) the composition is skewed to acidic residues. Residues 1–30 (MTDETEEDDTTQQRSSRNDGVSKNKGKGFK) form a disordered region. Residues Tyr48 and Asp126 each contribute to the substrate site. The 148-residue stretch at 66 to 213 (WWDQIDEYLL…VEEFSRLQSP (148 aa)) folds into the Tyrosine-protein phosphatase domain. Residue Cys157 is the Phosphocysteine intermediate of the active site. The Glucan phosphatase signature motif CXAGXGR motif lies at 157–163 (CKAGRGR). 158 to 163 (KAGRGR) provides a ligand contact to substrate.

It belongs to the protein-tyrosine phosphatase family. Non-receptor class dual specificity subfamily. In terms of tissue distribution, expressed in roots, leaves, stems and flowers. Expressed at low levels in stems and flowers.

It carries out the reaction O-phospho-L-seryl-[protein] + H2O = L-seryl-[protein] + phosphate. The enzyme catalyses O-phospho-L-threonyl-[protein] + H2O = L-threonyl-[protein] + phosphate. It catalyses the reaction O-phospho-L-tyrosyl-[protein] + H2O = L-tyrosyl-[protein] + phosphate. The catalysed reaction is a 1,2-diacyl-sn-glycero-3-phospho-(1'-sn-glycero-3'-phosphate) + H2O = a 1,2-diacyl-sn-glycero-3-phospho-(1'-sn-glycerol) + phosphate. It participates in phospholipid metabolism; phosphatidylglycerol biosynthesis; phosphatidylglycerol from CDP-diacylglycerol: step 2/2. Exhibits phosphatidylglycerophosphate phosphatase activity. Involved in root growth and columella cells organization. May possess protein phosphatase activity. This Arabidopsis thaliana (Mouse-ear cress) protein is Phosphatidylglycerophosphate phosphatase PTPMT2.